The sequence spans 491 residues: Probable cytosol aminopeptidase (491 aa).

Mn(2+)-binding residues include K264 and D269. Residue K276 is part of the active site. Residues D287, D346, and E348 each coordinate Mn(2+). R350 is a catalytic residue.

Belongs to the peptidase M17 family. Mn(2+) serves as cofactor.

Its subcellular location is the cytoplasm. It carries out the reaction Release of an N-terminal amino acid, Xaa-|-Yaa-, in which Xaa is preferably Leu, but may be other amino acids including Pro although not Arg or Lys, and Yaa may be Pro. Amino acid amides and methyl esters are also readily hydrolyzed, but rates on arylamides are exceedingly low.. The enzyme catalyses Release of an N-terminal amino acid, preferentially leucine, but not glutamic or aspartic acids.. Its function is as follows. Presumably involved in the processing and regular turnover of intracellular proteins. Catalyzes the removal of unsubstituted N-terminal amino acids from various peptides. The chain is Probable cytosol aminopeptidase from Xylella fastidiosa (strain Temecula1 / ATCC 700964).